Consider the following 67-residue polypeptide: MPKLKTKSGVKKRFKLTASGKVKHGVAGKRHRLISHNAKYIRQNRGTEVISDADAKVIKKWAPYGLN.

The protein belongs to the bacterial ribosomal protein bL35 family.

The sequence is that of Large ribosomal subunit protein bL35 from Novosphingobium aromaticivorans (strain ATCC 700278 / DSM 12444 / CCUG 56034 / CIP 105152 / NBRC 16084 / F199).